We begin with the raw amino-acid sequence, 195 residues long: Protein Nef (195 aa).

A lipid anchor (N-myristoyl glycine; by host) is attached at glycine 2. The segment at 2–53 is N-terminal; associates with the host plasma membrane; it reads GNIFGRWPGARKAIEDLHNTSSEPVGQASQDLQNKGGLTTNTLGTSADVLEY. A necessary for MHC-I internalization region spans residues 7–22; the sequence is RWPGARKAIEDLHNTS. The acidic stretch occupies residues 59–61; it reads EEE. Residues 65–74 are SH3-binding; that stretch reads PVRPAVPMRP. Residues 65 to 74 are SH3-binding; interaction with Src family tyrosine kinases; it reads PVRPAVPMRP. A PxxP motif is present at residues 68 to 71; that stretch reads PAVP. Residues 104–120 form a mediates dimerization region; sequence AILDTWMYNTQGVFPDW. Positions 144-171 are binding to ATP6V1H; it reads VDPPEDDEKNILLHPACSHGTTDPDGET. The Di-leucine internalization motif; necessary for CD4 internalization signature appears at 155 to 156; the sequence is LL.

Belongs to the lentivirus primate group Nef protein family. In terms of assembly, homodimer.

Its subcellular location is the host cell membrane. The protein localises to the host cytoplasm. The protein resides in the host perinuclear region. It is found in the virion. It localises to the secreted. Factor of infectivity and pathogenicity, required for optimal virus replication. Alters numerous pathways of T-lymphocyte function and down-regulates immunity surface molecules in order to evade host defense and increase viral infectivity. Alters the functionality of other immunity cells, like dendritic cells, monocytes/macrophages and NK cells. One of the earliest and most abundantly expressed viral proteins. Its function is as follows. In infected CD4(+) T-lymphocytes, down-regulates the surface MHC-I, mature MHC-II, CD4, CD28 and probably other immunity surface molecules. In consequence infected cells are masked for immune recognition by cytotoxic T-lymphocytes. Decreasing the number of immune receptors also prevents reinfection by more HIV particles (superinfection). In terms of biological role, bypasses host T-cell signaling by inducing a transcriptional program nearly identical to that of anti-CD3 cell activation. Interaction with TCR-zeta chain up-regulates the Fas ligand (FasL). Increasing surface FasL molecules and decreasing surface MHC-I molecules on infected CD4(+) cells send attacking cytotoxic CD8+ T-lymphocytes into apoptosis. Functionally, plays a role in optimizing the host cell environment for viral replication without causing cell death by apoptosis. Protects the infected cells from apoptosis in order to keep them alive until the next virus generation is ready to strike. This is Protein Nef from Pan troglodytes (Chimpanzee).